The following is a 354-amino-acid chain: 3-dehydroquinate synthase (354 aa).

Residues 100–104 (GATGD), 124–125 (TT), Lys136, Lys145, and 163–166 (FLKT) contribute to the NAD(+) site. The Zn(2+) site is built by Glu178, His242, and His256.

It belongs to the sugar phosphate cyclases superfamily. Dehydroquinate synthase family. It depends on NAD(+) as a cofactor. Co(2+) is required as a cofactor. Zn(2+) serves as cofactor.

Its subcellular location is the cytoplasm. The catalysed reaction is 7-phospho-2-dehydro-3-deoxy-D-arabino-heptonate = 3-dehydroquinate + phosphate. It participates in metabolic intermediate biosynthesis; chorismate biosynthesis; chorismate from D-erythrose 4-phosphate and phosphoenolpyruvate: step 2/7. Catalyzes the conversion of 3-deoxy-D-arabino-heptulosonate 7-phosphate (DAHP) to dehydroquinate (DHQ). This is 3-dehydroquinate synthase from Staphylococcus aureus (strain COL).